Here is a 305-residue protein sequence, read N- to C-terminus: MTEQLHLKIPASTANLGVGFDSIGMAIDKYLHLYVKRIEEEEWEFTYLNSELDSLPKNKDNYVFKVAQQVASKYNVKLPSLSVEMRSDIPLARGLGSSASALVGALYIANYFGNIQLSKYELLQLATEIEGHPDNVAPTIYGGLLAGFYNPDTKETNVAHIDVPDVDIILTIPPYELKTEDSRNVLPDQFSHKRAVQSSAISNTMLCALIQHNYGLAGKMMSQDGFHEPYRQHLISEFKEVKAIAQQYDAYATVISGAGPTILTMSPKEKSGQLVRALRKAVTTCHSELATINEIGVVEEIVYPS.

Pro90–Ser100 is an ATP binding site.

Belongs to the GHMP kinase family. Homoserine kinase subfamily.

The protein localises to the cytoplasm. The catalysed reaction is L-homoserine + ATP = O-phospho-L-homoserine + ADP + H(+). It functions in the pathway amino-acid biosynthesis; L-threonine biosynthesis; L-threonine from L-aspartate: step 4/5. Catalyzes the ATP-dependent phosphorylation of L-homoserine to L-homoserine phosphate. This chain is Homoserine kinase, found in Staphylococcus haemolyticus (strain JCSC1435).